The chain runs to 207 residues: Guanylate kinase (207 aa).

The Guanylate kinase-like domain maps to 6 to 185; the sequence is GLLIVLSGPS…AKQRIQSIVE (180 aa). ATP is bound at residue 13 to 20; sequence GPSGVGKG.

The protein belongs to the guanylate kinase family.

The protein resides in the cytoplasm. It carries out the reaction GMP + ATP = GDP + ADP. In terms of biological role, essential for recycling GMP and indirectly, cGMP. The protein is Guanylate kinase of Staphylococcus saprophyticus subsp. saprophyticus (strain ATCC 15305 / DSM 20229 / NCIMB 8711 / NCTC 7292 / S-41).